The sequence spans 101 residues: Protein PrgJ (101 aa).

To S.flexneri MxiI.

Required for invasion of epithelial cells. The protein is Protein PrgJ (prgJ) of Salmonella typhimurium (strain LT2 / SGSC1412 / ATCC 700720).